We begin with the raw amino-acid sequence, 632 residues long: Putative ankyrin repeat protein L767 (632 aa).

ANK repeat units follow at residues Tyr61–Phe97, Phe228–Glu250, Lys251–Asp282, Asn345–Asp374, and Asn517–Asp546.

This chain is Putative ankyrin repeat protein L767, found in Acanthamoeba polyphaga mimivirus (APMV).